Reading from the N-terminus, the 447-residue chain is Gastrin/cholecystokinin type B receptor (447 aa).

Residues 1-57 are Extracellular-facing; the sequence is MELLKLNRSVQGTGPGPGASLCRPGAPLLNSSSVGNLSCEPPRIRGAGTRELELAIR. N-linked (GlcNAc...) asparagine glycans are attached at residues N7, N30, and N36. The helical transmembrane segment at 58–79 threads the bilayer; sequence ITLYAVIFLMSVGGNMLIIVVL. At 80–87 the chain is on the cytoplasmic side; sequence GLSRRLRT. Residues 88 to 109 traverse the membrane as a helical segment; sequence VTNAFLLSLAVSDLLLAVACMP. Residues 110-131 are Extracellular-facing; the sequence is FTLLPNLMGTFIFGTVICKAVS. C127 and C205 are oxidised to a cystine. The chain crosses the membrane as a helical span at residues 132–150; sequence YLMGVSVSVSTLSLVAIAL. The Cytoplasmic segment spans residues 151–170; that stretch reads ERYSAICRPLQARVWQTRSH. A helical membrane pass occupies residues 171 to 189; it reads AARVIVATWLLSGLLMVPY. Over 190–219 the chain is Extracellular; that stretch reads PVYTVVQPVGPRVLQCVHRWPSARVRQTWS. A helical membrane pass occupies residues 220–242; it reads VLLLLLLFFIPGVVMAVAYGLIS. The Cytoplasmic portion of the chain corresponds to 243-333; sequence RELYLGLRFD…KLLAKKRVVR (91 aa). The interval 258 to 285 is disordered; that stretch reads DSQSRVRNQGGLPGAVHQNGRCRPETGA. The chain crosses the membrane as a helical span at residues 334 to 355; it reads MLLVIVVLFFLCWLPVYSANTW. Residues 356 to 373 lie on the Extracellular side of the membrane; the sequence is RAFDGPGAHRALSGAPIS. Residues 374 to 394 traverse the membrane as a helical segment; the sequence is FIHLLSYASACVNPLVYCFMH. The Cytoplasmic segment spans residues 395–447; that stretch reads RRFRQACLETCARCCPRPPRARPRALPDEDPPTPSIASLSRLSYTTISTLGPG. C408 carries the S-palmitoyl cysteine lipid modification.

This sequence belongs to the G-protein coupled receptor 1 family. In terms of tissue distribution, isoform 1 is expressed in brain, pancreas, stomach, the colon cancer cell line LoVo and the T-lymphoblastoma Jurkat, but not in heart, placenta, liver, lung, skeletal muscle, kidney or the stomach cancer cell line AGS. Expressed at high levels in the small cell lung cancer cell line NCI-H510, at lower levels in NCI-H345, NCI-H69 and GLC-28 cell lines, not expressed in GLC-19 cell line. Within the stomach, expressed at high levels in the mucosa of the gastric fundus and at low levels in the antrum and duodenum. Isoform 2 is present in pancreatic cancer cells and colorectal cancer cells, but not in normal pancreas or colonic mucosa. Isoform 3 is expressed in brain, pancreas, stomach, the stomach cancer cell line AGS and the colon cancer cell line LoVo.

The protein localises to the cell membrane. Receptor for gastrin and cholecystokinin. The CCK-B receptors occur throughout the central nervous system where they modulate anxiety, analgesia, arousal, and neuroleptic activity. This receptor mediates its action by association with G proteins that activate a phosphatidylinositol-calcium second messenger system. In terms of biological role, isoform 2 is constitutively activated and may regulate cancer cell proliferation via a gastrin-independent mechanism. In Homo sapiens (Human), this protein is Gastrin/cholecystokinin type B receptor.